The chain runs to 270 residues: Coiled-coil domain-containing protein 3 (270 aa).

The N-terminal stretch at 1–21 is a signal peptide; it reads MLRQLLLAALCLAGPPAPARA. N-linked (GlcNAc...) asparagine glycosylation occurs at asparagine 100. Residues 188-251 are a coiled coil; it reads SVQKALFEEE…NQKLSEKLAA (64 aa).

In terms of assembly, homodimer. As to expression, expressed in umbilical vein endothelial cells (HUVEC), and at lower levels in aortic smooth muscle cells (HASMC).

It localises to the secreted. Functionally, negatively regulates TNF-alpha-induced pro-inflammatory response in endothelial cells (ECs) via inhibition of TNF-alpha-induced NF-kappaB activation in ECs. Positively regulates lipid accumulation in adipose cells. The chain is Coiled-coil domain-containing protein 3 (CCDC3) from Homo sapiens (Human).